A 209-amino-acid chain; its full sequence is Ubiquitin-conjugating enzyme E2 S (209 aa).

Positions 14 to 160 (QTIRQVMREL…ARMMTEIHAQ (147 aa)) constitute a UBC core domain. Catalysis depends on Cys-98, which acts as the Glycyl thioester intermediate. A disordered region spans residues 164-209 (CAAGAAGDSKDDDGPSTKKHAGLDKKLQDKKKEKLLKEKKRMLKRL). Positions 171 to 199 (DSKDDDGPSTKKHAGLDKKLQDKKKEKLL) are enriched in basic and acidic residues. The span at 200-209 (KEKKRMLKRL) shows a compositional bias: basic residues.

It belongs to the ubiquitin-conjugating enzyme family.

It catalyses the reaction S-ubiquitinyl-[E1 ubiquitin-activating enzyme]-L-cysteine + [E2 ubiquitin-conjugating enzyme]-L-cysteine = [E1 ubiquitin-activating enzyme]-L-cysteine + S-ubiquitinyl-[E2 ubiquitin-conjugating enzyme]-L-cysteine.. Its pathway is protein modification; protein ubiquitination. Functionally, catalyzes the covalent attachment of ubiquitin to other proteins. Acts as an essential factor of the anaphase promoting complex/cyclosome (APC/C), a cell cycle-regulated ubiquitin ligase that controls progression through mitosis. Acts by specifically elongating polyubiquitin chains initiated by the E2 enzyme vih/UbcH10 on APC/C substrates, enhancing the degradation of APC/C substrates by the proteasome and promoting mitotic exit. The sequence is that of Ubiquitin-conjugating enzyme E2 S from Drosophila ananassae (Fruit fly).